A 287-amino-acid chain; its full sequence is Acetyl-coenzyme A carboxylase carboxyl transferase subunit beta (287 aa).

A CoA carboxyltransferase N-terminal domain is found at 25-287 (VWTKCSACEQ…KMLNTHVIEE (263 aa)). 4 residues coordinate Zn(2+): cysteine 29, cysteine 32, cysteine 48, and cysteine 51. The C4-type zinc-finger motif lies at 29–51 (CSACEQVLYRAELERNLEVCPKC).

Belongs to the AccD/PCCB family. Acetyl-CoA carboxylase is a heterohexamer composed of biotin carboxyl carrier protein (AccB), biotin carboxylase (AccC) and two subunits each of ACCase subunit alpha (AccA) and ACCase subunit beta (AccD). The cofactor is Zn(2+).

It localises to the cytoplasm. The catalysed reaction is N(6)-carboxybiotinyl-L-lysyl-[protein] + acetyl-CoA = N(6)-biotinyl-L-lysyl-[protein] + malonyl-CoA. It functions in the pathway lipid metabolism; malonyl-CoA biosynthesis; malonyl-CoA from acetyl-CoA: step 1/1. In terms of biological role, component of the acetyl coenzyme A carboxylase (ACC) complex. Biotin carboxylase (BC) catalyzes the carboxylation of biotin on its carrier protein (BCCP) and then the CO(2) group is transferred by the transcarboxylase to acetyl-CoA to form malonyl-CoA. The polypeptide is Acetyl-coenzyme A carboxylase carboxyl transferase subunit beta (Aeromonas salmonicida (strain A449)).